The chain runs to 163 residues: Probable chemoreceptor glutamine deamidase CheD (163 aa).

Belongs to the CheD family.

It catalyses the reaction L-glutaminyl-[protein] + H2O = L-glutamyl-[protein] + NH4(+). Probably deamidates glutamine residues to glutamate on methyl-accepting chemotaxis receptors (MCPs), playing an important role in chemotaxis. This is Probable chemoreceptor glutamine deamidase CheD from Borreliella burgdorferi (strain ATCC 35210 / DSM 4680 / CIP 102532 / B31) (Borrelia burgdorferi).